A 485-amino-acid chain; its full sequence is Adenosylhomocysteinase (485 aa).

The substrate site is built by T64, D139, and E205. 206–208 (TTT) serves as a coordination point for NAD(+). Substrate is bound by residues K235 and D239. NAD(+)-binding positions include N240, 269–274 (GYGDVG), E292, N327, 348–350 (IGH), and N397.

Belongs to the adenosylhomocysteinase family. In terms of assembly, homotetramer. NAD(+) is required as a cofactor. As to expression, mainly in floral buds and stems.

It catalyses the reaction S-adenosyl-L-homocysteine + H2O = L-homocysteine + adenosine. It participates in amino-acid biosynthesis; L-homocysteine biosynthesis; L-homocysteine from S-adenosyl-L-homocysteine: step 1/1. Functionally, adenosylhomocysteine is a competitive inhibitor of S-adenosyl-L-methionine-dependent methyl transferase reactions; therefore adenosylhomocysteinase may play a key role in the control of methylations via regulation of the intracellular concentration of adenosylhomocysteine. This Petroselinum crispum (Parsley) protein is Adenosylhomocysteinase (SAHH).